The chain runs to 185 residues: Ribosome-recycling factor (185 aa).

It belongs to the RRF family.

The protein resides in the cytoplasm. Its function is as follows. Responsible for the release of ribosomes from messenger RNA at the termination of protein biosynthesis. May increase the efficiency of translation by recycling ribosomes from one round of translation to another. This chain is Ribosome-recycling factor, found in Geotalea daltonii (strain DSM 22248 / JCM 15807 / FRC-32) (Geobacter daltonii).